A 282-amino-acid chain; its full sequence is 4-hydroxy-tetrahydrodipicolinate reductase (282 aa).

NAD(+) is bound at residue 12–17 (GVTGRM). Arg44 provides a ligand contact to NADP(+). NAD(+) is bound by residues 107-109 (GTT) and 131-134 (SSNF). The active-site Proton donor/acceptor is the His164. (S)-2,3,4,5-tetrahydrodipicolinate is bound at residue His165. Lys168 acts as the Proton donor in catalysis. 174-175 (GT) contacts (S)-2,3,4,5-tetrahydrodipicolinate.

It belongs to the DapB family. In terms of assembly, homotetramer.

It localises to the cytoplasm. It carries out the reaction (S)-2,3,4,5-tetrahydrodipicolinate + NAD(+) + H2O = (2S,4S)-4-hydroxy-2,3,4,5-tetrahydrodipicolinate + NADH + H(+). It catalyses the reaction (S)-2,3,4,5-tetrahydrodipicolinate + NADP(+) + H2O = (2S,4S)-4-hydroxy-2,3,4,5-tetrahydrodipicolinate + NADPH + H(+). It participates in amino-acid biosynthesis; L-lysine biosynthesis via DAP pathway; (S)-tetrahydrodipicolinate from L-aspartate: step 4/4. Its function is as follows. Catalyzes the conversion of 4-hydroxy-tetrahydrodipicolinate (HTPA) to tetrahydrodipicolinate. The chain is 4-hydroxy-tetrahydrodipicolinate reductase from Blochmanniella pennsylvanica (strain BPEN).